A 951-amino-acid chain; its full sequence is Valine--tRNA ligase (951 aa).

The 'HIGH' region signature appears at 42-52; that stretch reads PNVTGSLHMGH. The 'KMSKS' region signature appears at 554 to 558; it reads KMSKS. Residue Lys-557 coordinates ATP. Positions 880 to 944 form a coiled coil; the sequence is AGLINKEDEL…AEAKAKLIEQ (65 aa).

It belongs to the class-I aminoacyl-tRNA synthetase family. ValS type 1 subfamily. As to quaternary structure, monomer.

It localises to the cytoplasm. The enzyme catalyses tRNA(Val) + L-valine + ATP = L-valyl-tRNA(Val) + AMP + diphosphate. Its function is as follows. Catalyzes the attachment of valine to tRNA(Val). As ValRS can inadvertently accommodate and process structurally similar amino acids such as threonine, to avoid such errors, it has a 'posttransfer' editing activity that hydrolyzes mischarged Thr-tRNA(Val) in a tRNA-dependent manner. This is Valine--tRNA ligase from Shigella boydii serotype 4 (strain Sb227).